The primary structure comprises 158 residues: Small ribosomal subunit protein uS9 (158 aa).

It belongs to the universal ribosomal protein uS9 family.

The chain is Small ribosomal subunit protein uS9 from Rhodopseudomonas palustris (strain BisA53).